Here is a 630-residue protein sequence, read N- to C-terminus: MQLRAEEISQIIKKQIQNIDKAAQVTETGTVLTVGDGIARVHGLSRAMAGELVEFTGSEGGSLMGLVLNLEQDNVGAAIFGDTSSIKEGDAVKRTGRIMEVPVGEATLGRVVNALGMPIDGKGPLETKERRRVEVKAPGIIQRQPVTEPMQTGIKAIDAMIPVGRGQRELIIGDRQTGKTAVAVDAIINQKGKGVICVYVAIGQKLSTVRQVVDKLDAHGALEYTIIVAATASETAPLQFIAPYTGVTIGEYFRDSGRHALCIYDDLSKQAVAYRQLSLLLRRPPGREAYPGDVFYLHSRLLERAAKMADVFYVVSKGTKIEGGDASYRGIDGKAHVGAHGMHSAKDSLWKTIDGALFEKLEQARKDEKKDEIKKLEQQLSDKAKASDYEIVRDPKSGGSLTALPVIETQAGDVSAYIPTNVISITDGQIFLEADLFYSGVRPAINVGISVSRVGGNAQIKAMKSIAGTLRLDLAQYRAMAAFSQFASDLDAKTRAQLERGARLTEILKQGQYVPLAVEKQILIIYAGTQGLLDSLPVSSLSRFEEELYKFVEAKHPQIFTDIREKKVLDDDLKSRMTKAIDTFKKRFAVEAGGASTAADEDGAGDDEEEAPAPKAKSKNAKSASKAKEK.

173–180 (GDRQTGKT) serves as a coordination point for ATP. The interval 592–630 (AGGASTAADEDGAGDDEEEAPAPKAKSKNAKSASKAKEK) is disordered. The span at 599 to 611 (ADEDGAGDDEEEA) shows a compositional bias: acidic residues.

This sequence belongs to the ATPase alpha/beta chains family. F-type ATPases have 2 components, CF(1) - the catalytic core - and CF(0) - the membrane proton channel. CF(1) has five subunits: alpha(3), beta(3), gamma(1), delta(1), epsilon(1). CF(0) has three main subunits: a(1), b(2) and c(9-12). The alpha and beta chains form an alternating ring which encloses part of the gamma chain. CF(1) is attached to CF(0) by a central stalk formed by the gamma and epsilon chains, while a peripheral stalk is formed by the delta and b chains.

The protein localises to the cell inner membrane. It carries out the reaction ATP + H2O + 4 H(+)(in) = ADP + phosphate + 5 H(+)(out). Produces ATP from ADP in the presence of a proton gradient across the membrane. The alpha chain is a regulatory subunit. The polypeptide is ATP synthase subunit alpha (Sorangium cellulosum (strain So ce56) (Polyangium cellulosum (strain So ce56))).